We begin with the raw amino-acid sequence, 88 residues long: MAASPVLAVDNSSVAADQLKSIIERIERLEEEKAGLAGDIKDVYAEAKANGFDTKVLRKIISIRKRDHEERQEEEAILELYMQALGMA.

This sequence belongs to the UPF0335 family.

This is UPF0335 protein Mnod_5968 from Methylobacterium nodulans (strain LMG 21967 / CNCM I-2342 / ORS 2060).